The chain runs to 159 residues: SsrA-binding protein (159 aa).

Positions 140 to 150 (RATEKERDWNR) are enriched in basic and acidic residues. Residues 140–159 (RATEKERDWNRQKQRVLRQR) form a disordered region.

Belongs to the SmpB family.

It is found in the cytoplasm. Functionally, required for rescue of stalled ribosomes mediated by trans-translation. Binds to transfer-messenger RNA (tmRNA), required for stable association of tmRNA with ribosomes. tmRNA and SmpB together mimic tRNA shape, replacing the anticodon stem-loop with SmpB. tmRNA is encoded by the ssrA gene; the 2 termini fold to resemble tRNA(Ala) and it encodes a 'tag peptide', a short internal open reading frame. During trans-translation Ala-aminoacylated tmRNA acts like a tRNA, entering the A-site of stalled ribosomes, displacing the stalled mRNA. The ribosome then switches to translate the ORF on the tmRNA; the nascent peptide is terminated with the 'tag peptide' encoded by the tmRNA and targeted for degradation. The ribosome is freed to recommence translation, which seems to be the essential function of trans-translation. The chain is SsrA-binding protein from Alcanivorax borkumensis (strain ATCC 700651 / DSM 11573 / NCIMB 13689 / SK2).